The primary structure comprises 112 residues: Putative iron-sulfur cluster insertion protein ErpA (112 aa).

Iron-sulfur cluster is bound by residues Cys40, Cys104, and Cys106.

The protein belongs to the HesB/IscA family. In terms of assembly, homodimer. Iron-sulfur cluster serves as cofactor.

In terms of biological role, required for insertion of 4Fe-4S clusters. This chain is Putative iron-sulfur cluster insertion protein ErpA, found in Neisseria gonorrhoeae (strain ATCC 700825 / FA 1090).